A 114-amino-acid chain; its full sequence is Ig heavy chain V-A2 region BS-1 (114 aa).

A Pyrrolidone carboxylic acid modification is found at glutamine 1. In terms of domain architecture, Ig-like spans 1 to 107; sequence QSVKESEGGL…YLGLMDVWGP (107 aa).

The polypeptide is Ig heavy chain V-A2 region BS-1 (Oryctolagus cuniculus (Rabbit)).